We begin with the raw amino-acid sequence, 524 residues long: Importin subunit alpha-1 (524 aa).

The segment at 1 to 42 (MGDEFRPSHEERSKMYKSNVRDQNEMRRKRREDEVQIRKNRR) is disordered. In terms of domain architecture, IBB spans 1–59 (MGDEFRPSHEERSKMYKSNVRDQNEMRRKRREDEVQIRKNRRDEKFERNRQITVQRSLS).

The protein belongs to the importin alpha family. In terms of assembly, forms a complex with an importin beta subunit. Adult germline tissues.

It is found in the cytoplasm. Binds specifically and directly to substrates containing either a simple or bipartite NLS motif. Promotes docking of import substrates to the nuclear envelope. Seems to act as a cytosolic receptor for both simple and bipartite NLS motifs. The protein is Importin subunit alpha-1 (ima-1) of Caenorhabditis elegans.